The following is a 120-amino-acid chain: NAD(P)H-quinone oxidoreductase subunit 3, chloroplastic (120 aa).

Transmembrane regions (helical) follow at residues 2–22 (FLLYEYDIFWAFLIISSVIPI), 64–84 (MFALVFVVFDVETIFLYPWAL), and 88–108 (ILGVSVFIEALIFVLILVLGL).

This sequence belongs to the complex I subunit 3 family. In terms of assembly, NDH is composed of at least 16 different subunits, 5 of which are encoded in the nucleus.

The protein resides in the plastid. Its subcellular location is the chloroplast thylakoid membrane. The enzyme catalyses a plastoquinone + NADH + (n+1) H(+)(in) = a plastoquinol + NAD(+) + n H(+)(out). It catalyses the reaction a plastoquinone + NADPH + (n+1) H(+)(in) = a plastoquinol + NADP(+) + n H(+)(out). Functionally, NDH shuttles electrons from NAD(P)H:plastoquinone, via FMN and iron-sulfur (Fe-S) centers, to quinones in the photosynthetic chain and possibly in a chloroplast respiratory chain. The immediate electron acceptor for the enzyme in this species is believed to be plastoquinone. Couples the redox reaction to proton translocation, and thus conserves the redox energy in a proton gradient. In Oenothera biennis (German evening primrose), this protein is NAD(P)H-quinone oxidoreductase subunit 3, chloroplastic.